A 558-amino-acid polypeptide reads, in one-letter code: Acid-sensing ion channel 4-B (558 aa).

At 1–71 (MPIEFVCKIK…TSERLGFRQT (71 aa)) the chain is on the cytoplasmic side. A helical membrane pass occupies residues 72 to 92 (LWGLALLVSLGLFLYQATWSA). Residues 93–433 (ATYLERPHLA…ETIEQKKAYD (341 aa)) are Extracellular-facing. Intrachain disulfides connect cysteine 120–cysteine 204 and cysteine 182–cysteine 189. Asparagine 140, asparagine 183, asparagine 188, asparagine 210, and asparagine 245 each carry an N-linked (GlcNAc...) asparagine glycan. Disulfide bonds link cysteine 298/cysteine 373, cysteine 317/cysteine 369, cysteine 321/cysteine 367, cysteine 330/cysteine 351, and cysteine 332/cysteine 344. Asparagine 374 carries an N-linked (GlcNAc...) asparagine glycan. Residues 434–454 (IAGLLGDIGGQMGLFIGASIL) form a helical membrane-spanning segment. A GAS motif; ion selectivity filter motif is present at residues 450 to 452 (GAS). The Cytoplasmic portion of the chain corresponds to 455-558 (TILEILDYIY…QQAVQQDFAC (104 aa)).

This sequence belongs to the amiloride-sensitive sodium channel (TC 1.A.6) family. ASIC4 subfamily. In terms of assembly, homotrimer. Heterotrimer; with other ASIC proteins producing functional channels. Expressed in central nervous system.

The protein localises to the cell membrane. The catalysed reaction is Na(+)(in) = Na(+)(out). In terms of biological role, does not exhibit measurable stand-alone pH-gated sodium channel activity but may form pH-gated heterotrimeric sodium channels. In Danio rerio (Zebrafish), this protein is Acid-sensing ion channel 4-B.